A 500-amino-acid polypeptide reads, in one-letter code: Trehalose-6-phosphate synthase (500 aa).

Residue R28 coordinates D-glucose 6-phosphate. A UDP-alpha-D-glucose-binding site is contributed by 48–49 (GG). D-glucose 6-phosphate contacts are provided by Y104 and D158. Residues R300 and K305 each contribute to the UDP-alpha-D-glucose site. Residue R338 coordinates D-glucose 6-phosphate. Residue 403–407 (LVAKE) participates in UDP-alpha-D-glucose binding.

It belongs to the glycosyltransferase 20 family. Homotetramer.

It catalyses the reaction ADP-alpha-D-glucose + D-glucose 6-phosphate = alpha,alpha-trehalose 6-phosphate + ADP + H(+). The enzyme catalyses CDP-alpha-D-glucose + D-glucose 6-phosphate = alpha,alpha-trehalose 6-phosphate + CDP + H(+). It carries out the reaction GDP-alpha-D-glucose + D-glucose 6-phosphate = alpha,alpha-trehalose 6-phosphate + GDP + H(+). The catalysed reaction is TDP-alpha-D-glucose + D-glucose 6-phosphate = 5-methyl-UDP + alpha,alpha-trehalose 6-phosphate + H(+). It catalyses the reaction D-glucose 6-phosphate + UDP-alpha-D-glucose = alpha,alpha-trehalose 6-phosphate + UDP + H(+). Its pathway is glycan biosynthesis; trehalose biosynthesis. Its function is as follows. Probably involved in the osmoprotection via the biosynthesis of trehalose and in the production of glycogen and alpha-glucan via the TreS-Pep2 branch involved in the biosynthesis of maltose-1-phosphate (M1P). Catalyzes the transfer of glucose from UDP-glucose (UDP-Glc) to D-glucose 6-phosphate (Glc-6-P) to form trehalose-6-phosphate. Probably also able to use ADP-Glc, CDP-Glc, GDP-Glc and TDP-Glc as glucosyl donors. The sequence is that of Trehalose-6-phosphate synthase from Mycobacterium ulcerans (strain Agy99).